The chain runs to 179 residues: Large ribosomal subunit protein uL5 (179 aa).

Position 3 is an N6-acetyllysine (lysine 3).

Belongs to the universal ribosomal protein uL5 family. In terms of assembly, part of the 50S ribosomal subunit; part of the 5S rRNA/L5/L18/L25 subcomplex. Contacts the 5S rRNA and the P site tRNA. Forms a bridge to the 30S subunit in the 70S ribosome.

In terms of biological role, this is one of the proteins that bind and probably mediate the attachment of the 5S RNA into the large ribosomal subunit, where it forms part of the central protuberance. In the 70S ribosome it contacts protein S13 of the 30S subunit (bridge B1b), connecting the 2 subunits; this bridge is implicated in subunit movement. Contacts the P site tRNA; the 5S rRNA and some of its associated proteins might help stabilize positioning of ribosome-bound tRNAs. This Shigella flexneri protein is Large ribosomal subunit protein uL5.